A 476-amino-acid chain; its full sequence is MNFETVIGLEVHVELKTNSKIFSSAPAHFGAEPNTNTTVVDLGMPGVLPVLNKRAVEFGMKAAMAINCEIAEHTKFDRKNYFYPDNPKAYQISQFDKPIGEHGWIEIEVGGKKKKIGITRLHLEEDAGKNTHTSHGYSLVDINRQGTPLIEIVSEPDIRSAEEAYAYLEKLKSIIQYTGVSDVKMEEGSMRCDANISIRPIGQEEFGVKTELKNLNSFNNVRKGIEYEEKRQAEVLKSGGIIEQETRRFEEATGKTSLMRIKEGSDDYRYFPEPDLVDLFIDDAWKERIRAEIPELPDKRQIRYINDLGLPAYDAMVLTLTKEMSDFFEATLVAGADAKQASNWLMGEVSAYLNAEQKELHETGLTPENLAGMIKLIEAGTISSKIAKKVFRELAQNGGDAEQVVKDKGLVQISDEGALRTIISEILDNNEQSIVDFKNGKDRAVGFLVGQVMKATKGQANPPMVNKLLLEEMNKR.

The protein belongs to the GatB/GatE family. GatB subfamily. Heterotrimer of A, B and C subunits.

The enzyme catalyses L-glutamyl-tRNA(Gln) + L-glutamine + ATP + H2O = L-glutaminyl-tRNA(Gln) + L-glutamate + ADP + phosphate + H(+). It carries out the reaction L-aspartyl-tRNA(Asn) + L-glutamine + ATP + H2O = L-asparaginyl-tRNA(Asn) + L-glutamate + ADP + phosphate + 2 H(+). In terms of biological role, allows the formation of correctly charged Asn-tRNA(Asn) or Gln-tRNA(Gln) through the transamidation of misacylated Asp-tRNA(Asn) or Glu-tRNA(Gln) in organisms which lack either or both of asparaginyl-tRNA or glutaminyl-tRNA synthetases. The reaction takes place in the presence of glutamine and ATP through an activated phospho-Asp-tRNA(Asn) or phospho-Glu-tRNA(Gln). This is Aspartyl/glutamyl-tRNA(Asn/Gln) amidotransferase subunit B from Listeria monocytogenes serovar 1/2a (strain ATCC BAA-679 / EGD-e).